The following is a 62-amino-acid chain: MTIAFQLAVFALIATSSVLVISVPLVFASPDGWSNNKNVVFSGTSLWIGLVFLVAILNSLIS.

The next 2 membrane-spanning stretches (helical) occupy residues 8–28 (AVFA…LVFA) and 41–61 (FSGT…NSLI).

It belongs to the PsbZ family. As to quaternary structure, PSII is composed of 1 copy each of membrane proteins PsbA, PsbB, PsbC, PsbD, PsbE, PsbF, PsbH, PsbI, PsbJ, PsbK, PsbL, PsbM, PsbT, PsbY, PsbZ, Psb30/Ycf12, at least 3 peripheral proteins of the oxygen-evolving complex and a large number of cofactors. It forms dimeric complexes.

The protein resides in the plastid. The protein localises to the chloroplast thylakoid membrane. In terms of biological role, may control the interaction of photosystem II (PSII) cores with the light-harvesting antenna, regulates electron flow through the 2 photosystem reaction centers. PSII is a light-driven water plastoquinone oxidoreductase, using light energy to abstract electrons from H(2)O, generating a proton gradient subsequently used for ATP formation. In Hordeum vulgare (Barley), this protein is Photosystem II reaction center protein Z.